The sequence spans 216 residues: Ribosomal RNA small subunit methyltransferase G (216 aa).

S-adenosyl-L-methionine contacts are provided by residues Gly81, Leu86, 132–133, and Arg147; that span reads VE.

The protein belongs to the methyltransferase superfamily. RNA methyltransferase RsmG family.

It is found in the cytoplasm. The catalysed reaction is guanosine(527) in 16S rRNA + S-adenosyl-L-methionine = N(7)-methylguanosine(527) in 16S rRNA + S-adenosyl-L-homocysteine. Its function is as follows. Specifically methylates the N7 position of guanine in position 527 of 16S rRNA. The sequence is that of Ribosomal RNA small subunit methyltransferase G from Hydrogenovibrio crunogenus (strain DSM 25203 / XCL-2) (Thiomicrospira crunogena).